A 549-amino-acid polypeptide reads, in one-letter code: TBC1 domain family member 3B (549 aa).

A Rab-GAP TBC domain is found at 101–293 (GMPMNIRGPM…RLWDVYLVEG (193 aa)). 2 S-palmitoyl cysteine lipidation sites follow: C318 and C325. The interval 350–426 (LTRKQGDLPP…PGGAVREDTY (77 aa)) is disordered. Positions 398–417 (PRPIWSASPPRAPRSSTPCP) are enriched in low complexity.

Post-translationally, ubiquitinated by a CUL7-based E3 ligase, which leads to proteasomal degradation. In terms of processing, palmitoylation is required for membrane localization and protects TBC1D3 from ubiquitination.

It localises to the cell membrane. Its function is as follows. Acts as a GTPase activating protein for RAB5. Does not act on RAB4 or RAB11. This chain is TBC1 domain family member 3B (TBC1D3B), found in Homo sapiens (Human).